The chain runs to 224 residues: Biotin transport ATP-binding protein BioM (224 aa).

The 222-residue stretch at 3–224 folds into the ABC transporter domain; that stretch reads IQFESAGVSF…AIARYREIAA (222 aa). 34-41 serves as a coordination point for ATP; that stretch reads GLNGSGKT.

This sequence belongs to the ABC transporter superfamily. In terms of assembly, part of a biotin transporter complex composed of BioM, BioN and BioY.

The protein localises to the cell inner membrane. In terms of biological role, involved in biotin uptake. This chain is Biotin transport ATP-binding protein BioM (bioM), found in Rhizobium etli (strain ATCC 51251 / DSM 11541 / JCM 21823 / NBRC 15573 / CFN 42).